The following is a 236-amino-acid chain: Small ribosomal subunit protein uS2c (236 aa).

This sequence belongs to the universal ribosomal protein uS2 family.

It is found in the plastid. The protein resides in the chloroplast. This chain is Small ribosomal subunit protein uS2c (rps2), found in Lepidium virginicum (Virginia pepperweed).